The following is a 591-amino-acid chain: Aspartate--tRNA ligase (591 aa).

Glu175 contributes to the L-aspartate binding site. Residues 199–202 (QLFK) are aspartate. Residue Arg221 participates in L-aspartate binding. Residues 221–223 (RDE) and Gln230 contribute to the ATP site. His449 provides a ligand contact to L-aspartate. Glu483 provides a ligand contact to ATP. Arg490 serves as a coordination point for L-aspartate. 535 to 538 (GLDR) contacts ATP.

The protein belongs to the class-II aminoacyl-tRNA synthetase family. Type 1 subfamily. As to quaternary structure, homodimer.

Its subcellular location is the cytoplasm. It carries out the reaction tRNA(Asp) + L-aspartate + ATP = L-aspartyl-tRNA(Asp) + AMP + diphosphate. Functionally, catalyzes the attachment of L-aspartate to tRNA(Asp) in a two-step reaction: L-aspartate is first activated by ATP to form Asp-AMP and then transferred to the acceptor end of tRNA(Asp). The sequence is that of Aspartate--tRNA ligase from Oceanobacillus iheyensis (strain DSM 14371 / CIP 107618 / JCM 11309 / KCTC 3954 / HTE831).